Reading from the N-terminus, the 271-residue chain is Nus factor SuhB (271 aa).

The Mg(2+) site is built by glutamate 67, aspartate 86, and leucine 88. Glutamate 67 serves as a coordination point for substrate. Residues 88–91 (LDGT), arginine 187, and aspartate 216 contribute to the substrate site.

It belongs to the inositol monophosphatase superfamily. Homodimer. The rRNA transcription and antitermination complex (rrnTAC) consists of RNA polymerase (RNAP), NusA, NusB, NusE (rpsJ), NusG, SubB, ribosomal protein S4, DNA and precursor rRNA; S4 is more flexible than other subunits. Interacts with the ribosome and with RNA polymerase. Requires Mg(2+) as cofactor.

It localises to the cytoplasm. The enzyme catalyses a myo-inositol phosphate + H2O = myo-inositol + phosphate. Functionally, part of the processive rRNA transcription and antitermination complex (rrnTAC). The complex forms an RNA-chaperone ring around the RNA exit tunnel of RNA polymerase (RNAP). It supports rapid transcription and antitermination of rRNA operons, cotranscriptional rRNA folding, and annealing of distal rRNA regions to allow correct ribosome biogenesis. This subunit may play a central role in organizing the structure. Its function is as follows. A ribosome-associated protein, deletion of which alters the expression of 494 genes, suggesting a role in global gene regulation. Involved in control of pathogenesis-related genes. Required for the activation of virulence factors associated with acute infections (type 3 secretion system, T3SS) while suppressing virulence factors associated with chronic infections (biofilm formation and type 6 secretion system, T6SS). It probably acts at a post-transcriptional level. This chain is Nus factor SuhB, found in Pseudomonas aeruginosa (strain ATCC 15692 / DSM 22644 / CIP 104116 / JCM 14847 / LMG 12228 / 1C / PRS 101 / PAO1).